The chain runs to 740 residues: ATP-dependent RNA helicase DDX1 (740 aa).

Residues 1–295 (MAAFSEMGVM…APKALIVEPS (295 aa)) form a necessary for interaction with HNRNPK region. The segment at 1-448 (MAAFSEMGVM…DTVHHVVVPV (448 aa)) is interaction with dsRNA. A necessary for interaction with RELA region spans residues 1 to 525 (MAAFSEMGVM…KIDCDNLEQY (525 aa)). The Helicase ATP-binding domain occupies 2–428 (AAFSEMGVMP…SEKIMHFPTW (427 aa)). 46-53 (AETGSGKT) contacts ATP. In terms of domain architecture, B30.2/SPRY spans 70–247 (DQQEGKKGKT…LKFNFGEEEF (178 aa)). N6-acetyllysine occurs at positions 239 and 268. At K281 the chain carries N6-acetyllysine; alternate. K281 participates in a covalent cross-link: Glycyl lysine isopeptide (Lys-Gly) (interchain with G-Cter in SUMO2); alternate. The DEAD box motif lies at 370–373 (DEAD). S481 bears the Phosphoserine mark. Residues 493 to 681 (KGEYAVRAIK…QVEPDIKVPV (189 aa)) enclose the Helicase C-terminal domain. The necessary for interaction with HNRNPK stretch occupies residues 525–740 (YFMQQGGGPD…YLPNQLFRTF (216 aa)).

This sequence belongs to the DEAD box helicase family. DDX1 subfamily. As to quaternary structure, found in a multi-helicase-TICAM1 complex at least composed of DHX36, DDX1, DDX21 and TICAM1; this complex exists in resting cells with or without poly(I:C) RNA ligand stimulation. Interacts with DHX36. Interacts (via B30.2/SPRY domain) with DDX21 (via N-terminus); this interaction serves as bridges to TICAM1. Interacts with FAM98A (via N- and C-terminus). Interacts with MBNL1. Interacts with CSTF2. Interacts with HNRNPK. Interacts with ATM. Interacts with RELA (via C-terminus). Component of the tRNA-splicing ligase complex. Interacts with PHF5A (via C-terminus). Interacts with PQBP1. Interacts with ERCC6. In terms of processing, phosphorylated by ATM kinase; phosphorylation is increased in response to ionizing radiation (IR). Testis-specific. Expressed in the germ line stem cells, spermatogonia and spermatocytes of the testis. Also expressed in the seminoma and nonseminoma types of testicular germ cell tumors (TGCTs) (at protein level).

It is found in the nucleus. It localises to the cytoplasm. Its subcellular location is the cytosol. The protein resides in the cytoplasmic granule. The protein localises to the mitochondrion. It carries out the reaction ATP + H2O = ADP + phosphate + H(+). In terms of biological role, acts as an ATP-dependent RNA helicase, able to unwind both RNA-RNA and RNA-DNA duplexes. Possesses 5' single-stranded RNA overhang nuclease activity. Possesses ATPase activity on various RNA, but not DNA polynucleotides. May play a role in RNA clearance at DNA double-strand breaks (DSBs), thereby facilitating the template-guided repair of transcriptionally active regions of the genome. Together with RELA, acts as a coactivator to enhance NF-kappa-B-mediated transcriptional activation. Acts as a positive transcriptional regulator of cyclin CCND2 expression. Binds to the cyclin CCND2 promoter region. Associates with chromatin at the NF-kappa-B promoter region via association with RELA. Binds to poly(A) RNA. May be involved in 3'-end cleavage and polyadenylation of pre-mRNAs. Component of the tRNA-splicing ligase complex required to facilitate the enzymatic turnover of catalytic subunit RTCB: together with archease (ZBTB8OS), acts by facilitating the guanylylation of RTCB, a key intermediate step in tRNA ligation. Component of a multi-helicase-TICAM1 complex that acts as a cytoplasmic sensor of viral double-stranded RNA (dsRNA) and plays a role in the activation of a cascade of antiviral responses including the induction of pro-inflammatory cytokines via the adapter molecule TICAM1. Specifically binds (via helicase ATP-binding domain) on both short and long poly(I:C) dsRNA. The chain is ATP-dependent RNA helicase DDX1 (Ddx1) from Mus musculus (Mouse).